The chain runs to 332 residues: MDLQRTNQDTGTTTLFKVVISNTVNYLPKGVWILRNNTIDSLSIAKQFREIKNNINISHLSRENYWVETPFGKVFHSEVVSEEFMQIFIDKGNKALNNEEMIFACMSEKGWNVSLETVPNLDIPVGSYETQLGLPVGLHPKLHVHLKNLHKPEDECSLQGFMYIPPTLFIDRYELSNIAEMHADNLGHVLGIWGETDLEAPSYKLNGTGSFFWFDIYTDDGLLQKDYIDTIIPLHTRYQSPLKGQTYLKTSLTNPKFFWNCDTEDKVNDFRFLFSSKNKYTLQNDPTTLSISIPIADLSYKHVVEWVTNGVAIFSFFYLLLYLWKRFRYAKD.

The Lumenal segment spans residues 1-301 (MDLQRTNQDT…SIPIADLSYK (301 aa)). N-linked (GlcNAc...) asparagine glycosylation is found at Asn36, Asn56, Asn112, and Asn206. Residues 302–324 (HVVEWVTNGVAIFSFFYLLLYLW) form a helical membrane-spanning segment. At 325-332 (KRFRYAKD) the chain is on the cytoplasmic side.

The protein belongs to the PIGX family.

The protein localises to the endoplasmic reticulum membrane. It functions in the pathway glycolipid biosynthesis; glycosylphosphatidylinositol-anchor biosynthesis. In terms of biological role, required for proper folding and/or the stability of a subset of proteins in the endoplasmic reticulum. Component of glycosylphosphatidylinositol-mannosyltransferase 1 which transfers the first of the 4 mannoses in the GPI-anchor precursors during GPI-anchor biosynthesis. Probably acts by stabilizing the mannosyltransferase gpi14. In Schizosaccharomyces pombe (strain 972 / ATCC 24843) (Fission yeast), this protein is Protein pbn1 (pbn1).